Here is a 515-residue protein sequence, read N- to C-terminus: Sugar transport protein MST4 (515 aa).

Over 1–17 the chain is Cytoplasmic; that stretch reads MAGGFSVSGSGVEFEAK. The chain crosses the membrane as a helical span at residues 18–38; sequence ITPIVIISCIMAATGGLMFGY. The Extracellular portion of the chain corresponds to 39-78; that stretch reads DVGISGGVTSMDDFLREFFPTVLKKKHEDKESNYCKYDNQ. A helical transmembrane segment spans residues 79-99; it reads GLQLFTSSLYLAGLTATFFAS. Over 100–108 the chain is Cytoplasmic; the sequence is YTTRRLGRR. The helical transmembrane segment at 109-129 threads the bilayer; sequence LTMLIAGVFFIVGVIFNGAAQ. Over 130-138 the chain is Extracellular; that stretch reads NLAMLIVGR. A helical membrane pass occupies residues 139-159; sequence ILLGCGVGFANQAVPLFLSEI. The Cytoplasmic segment spans residues 160 to 165; it reads APTRIR. Residues 166–186 traverse the membrane as a helical segment; sequence GGLNILFQLNVTIGILFANLV. At 187 to 199 the chain is on the extracellular side; the sequence is NYGTAKIHPWGWR. A helical membrane pass occupies residues 200 to 220; it reads LSLSLAGIPAALLTLGALFVV. The Cytoplasmic portion of the chain corresponds to 221–280; it reads DTPNSLIERGRLEEGKAVLRKIRGTDNVEPEFNEIVEASRVAQEVKHPFRNLLQRRNRPQ. Residues 281–301 traverse the membrane as a helical segment; it reads LVIAVLLQIFQQFTGINAIMF. Residues 302 to 315 lie on the Extracellular side of the membrane; the sequence is YAPVLFNTLGFKTD. The helical transmembrane segment at 316 to 336 threads the bilayer; it reads ASLYSAVITGAVNVLSTLVSV. At 337 to 347 the chain is on the cytoplasmic side; sequence YSVDRVGRRML. Residues 348–368 traverse the membrane as a helical segment; the sequence is LLEAGVQMFLSQVAIAVVLGI. Residues 369–379 lie on the Extracellular side of the membrane; sequence KVTDRSDNLGH. Residues 380–400 form a helical membrane-spanning segment; the sequence is GWAIMVVVMVCTFVSSFAWSW. Residues 401 to 422 lie on the Cytoplasmic side of the membrane; sequence GPLGWLIPSETFPLETRSAGQS. The chain crosses the membrane as a helical span at residues 423 to 443; the sequence is VTVCVNLLFTFVIAQAFLSML. Over 444–448 the chain is Extracellular; it reads CHLKY. A helical membrane pass occupies residues 449–469; it reads AIFAFFSAWVVVMSLFVLFFL. Residues 470 to 515 lie on the Cytoplasmic side of the membrane; that stretch reads PETKNIPIEEMTERVWKQHWFWKRFMDDADKHHVVPNGGKSNGATV.

It belongs to the major facilitator superfamily. Sugar transporter (TC 2.A.1.1) family. Expressed in roots, shoots, leaf blades, leaf sheaths, anthers, ovaries and embryos.

It localises to the membrane. In terms of biological role, mediates active uptake of hexoses by sugar:proton symport. Can transport glucose, fructose, mannose and galactose. Can transport xylose and ribose. This is Sugar transport protein MST4 from Oryza sativa subsp. japonica (Rice).